A 908-amino-acid polypeptide reads, in one-letter code: SKI/DACH domain-containing protein 1 (908 aa).

Over residues 337–353 the composition is skewed to basic residues; that stretch reads HHHHHHHHHHHHHHHRA. A disordered region spans residues 337–461; sequence HHHHHHHHHH…SSSGSSQVSV (125 aa). Low complexity-rich tracts occupy residues 370 to 389 and 396 to 410; these read PHLGSFPESCSSDSESSSYS and SDFGSSLSSSSNSVS. Acidic residues predominate over residues 411–429; it reads SEEEEEEGEEEEEEEEEEG. The span at 449-461 shows a compositional bias: low complexity; the sequence is ESDSSSGSSQVSV. Residue Lys-688 forms a Glycyl lysine isopeptide (Lys-Gly) (interchain with G-Cter in SUMO2) linkage. 2 disordered regions span residues 744 to 763 and 792 to 818; these read ETPSLNPLAQSQGLSCTLGS and LQTPPVKPNLKSARSPRPTGKTETNEG. Positions 746–761 are enriched in polar residues; it reads PSLNPLAQSQGLSCTL.

This sequence belongs to the DACH/dachshund family.

This is SKI/DACH domain-containing protein 1 (SKIDA1) from Homo sapiens (Human).